We begin with the raw amino-acid sequence, 115 residues long: Large ribosomal subunit protein bL19 (115 aa).

It belongs to the bacterial ribosomal protein bL19 family.

This protein is located at the 30S-50S ribosomal subunit interface and may play a role in the structure and function of the aminoacyl-tRNA binding site. In Enterobacter sp. (strain 638), this protein is Large ribosomal subunit protein bL19.